The sequence spans 424 residues: Endochitinase 1 (424 aa).

The first 22 residues, 1-22 (MPSLFAQSLAIIATLQATLGLA), serve as a signal peptide directing secretion. The 364-residue stretch at 39 to 402 (YVNAVYFTNW…GTSSNKLGGP (364 aa)) folds into the GH18 domain. Asn74, Asn78, and Asn96 each carry an N-linked (GlcNAc...) asparagine glycan. Chitin-binding positions include 103-104 (GN) and 130-133 (GGWT). Glu172 serves as the catalytic Proton donor. Residues Tyr173 and 238-241 (MAYD) each bind chitin. Residues Asn248 and Asn347 are each glycosylated (N-linked (GlcNAc...) asparagine). Residue Trp379 participates in chitin binding. The interval 385 to 412 (RQGPDSLIGTSSNKLGGPDTTENLLNYP) is disordered. The segment covering 392 to 408 (IGTSSNKLGGPDTTENL) has biased composition (polar residues).

This sequence belongs to the glycosyl hydrolase 18 family. Chitinase class V subfamily.

Its subcellular location is the secreted. The enzyme catalyses Random endo-hydrolysis of N-acetyl-beta-D-glucosaminide (1-&gt;4)-beta-linkages in chitin and chitodextrins.. Secreted chitinase involved in the degradation of chitin, a component of the cell walls of fungi and exoskeletal elements of some animals (including worms and arthropods). Participates in the infection process and directly acts in the penetration process of the host cuticle. The chain is Endochitinase 1 (chit1) from Metarhizium robertsii (strain ARSEF 23 / ATCC MYA-3075) (Metarhizium anisopliae (strain ARSEF 23)).